The sequence spans 211 residues: Bacteriorhodopsin (211 aa).

A helical transmembrane segment spans residues 1–19 (IWLWLGTAGMFLGMLYFIA). The Cytoplasmic segment spans residues 20–33 (RGWGETDSRRQKFY). A helical transmembrane segment spans residues 34-52 (IATILITAIAFVNYLAMAL). Topologically, residues 53–68 (GFGLTIVEFAGEEHPI) are extracellular. Residues 69-86 (YWARYSDWLFTTPLLLYD) form a helical membrane-spanning segment. Over 87-97 (LGLLAGADRNT) the chain is Cytoplasmic. Residues 98 to 117 (ITSLVSLDVLMIGTGLVATL) form a helical membrane-spanning segment. Topologically, residues 118 to 130 (SAGSGVLSAGAER) are extracellular. The chain crosses the membrane as a helical span at residues 131–150 (LVWWGISTAFLLVLLYFLFS). Residues 151-168 (SLSGRVADLPSDTRSTFK) are Cytoplasmic-facing. A helical membrane pass occupies residues 169–187 (TLRNLVTVVWLVYPVWWLI). Topologically, residues 188-199 (GTEGIGLVGIGI) are extracellular. Residues 200–211 (ETAGFMVIDLTA) traverse the membrane as a helical segment.

It belongs to the archaeal/bacterial/fungal opsin family.

Its subcellular location is the cell membrane. Light-driven proton pump. This is Bacteriorhodopsin (bop) from Halobacterium halobium (strain port).